The primary structure comprises 166 residues: NAD(P)H-quinone oxidoreductase subunit I, chloroplastic (166 aa).

2 4Fe-4S ferredoxin-type domains span residues 55–84 (GRIH…VDWK) and 95–124 (LNYS…MTEE). Residues C64, C67, C70, C74, C104, C107, C110, and C114 each contribute to the [4Fe-4S] cluster site.

Belongs to the complex I 23 kDa subunit family. As to quaternary structure, NDH is composed of at least 16 different subunits, 5 of which are encoded in the nucleus. [4Fe-4S] cluster serves as cofactor.

Its subcellular location is the plastid. The protein localises to the chloroplast thylakoid membrane. It catalyses the reaction a plastoquinone + NADH + (n+1) H(+)(in) = a plastoquinol + NAD(+) + n H(+)(out). The catalysed reaction is a plastoquinone + NADPH + (n+1) H(+)(in) = a plastoquinol + NADP(+) + n H(+)(out). Functionally, NDH shuttles electrons from NAD(P)H:plastoquinone, via FMN and iron-sulfur (Fe-S) centers, to quinones in the photosynthetic chain and possibly in a chloroplast respiratory chain. The immediate electron acceptor for the enzyme in this species is believed to be plastoquinone. Couples the redox reaction to proton translocation, and thus conserves the redox energy in a proton gradient. In Espeletia timotensis (Andean giant rosette), this protein is NAD(P)H-quinone oxidoreductase subunit I, chloroplastic.